We begin with the raw amino-acid sequence, 260 residues long: Adenosylcobinamide-GDP ribazoletransferase (260 aa).

Transmembrane regions (helical) follow at residues 40-60 (AFPF…LLLL), 64-84 (ADPL…TGAL), 117-137 (YGAI…AAIV), 142-162 (PLAA…AITW), 189-209 (FALV…FGLW), and 210-230 (PLVA…VFIR).

Belongs to the CobS family. The cofactor is Mg(2+).

The protein localises to the cell inner membrane. It carries out the reaction alpha-ribazole + adenosylcob(III)inamide-GDP = adenosylcob(III)alamin + GMP + H(+). The enzyme catalyses alpha-ribazole 5'-phosphate + adenosylcob(III)inamide-GDP = adenosylcob(III)alamin 5'-phosphate + GMP + H(+). The protein operates within cofactor biosynthesis; adenosylcobalamin biosynthesis; adenosylcobalamin from cob(II)yrinate a,c-diamide: step 7/7. Joins adenosylcobinamide-GDP and alpha-ribazole to generate adenosylcobalamin (Ado-cobalamin). Also synthesizes adenosylcobalamin 5'-phosphate from adenosylcobinamide-GDP and alpha-ribazole 5'-phosphate. The protein is Adenosylcobinamide-GDP ribazoletransferase of Rhizobium etli (strain CIAT 652).